Here is a 476-residue protein sequence, read N- to C-terminus: Glutamate--tRNA ligase (476 aa).

The short motif at 9-19 is the 'HIGH' region element; the sequence is PSPTGTLHIGT. Positions 248-252 match the 'KMSKS' region motif; sequence KLSKR. ATP is bound at residue lysine 251.

Belongs to the class-I aminoacyl-tRNA synthetase family. Glutamate--tRNA ligase type 1 subfamily. Monomer.

The protein localises to the cytoplasm. The enzyme catalyses tRNA(Glu) + L-glutamate + ATP = L-glutamyl-tRNA(Glu) + AMP + diphosphate. Catalyzes the attachment of glutamate to tRNA(Glu) in a two-step reaction: glutamate is first activated by ATP to form Glu-AMP and then transferred to the acceptor end of tRNA(Glu). The chain is Glutamate--tRNA ligase from Synechococcus sp. (strain CC9311).